Consider the following 266-residue polypeptide: Nuclease (266 aa).

The N-terminal stretch at 1-21 is a signal peptide; sequence MRFNNKMLALAALLFAAQASA. A disulfide bridge links C30 with C34. The active-site Proton acceptor is H110. N140 is a binding site for Mg(2+). An intrachain disulfide couples C222 to C264.

Belongs to the DNA/RNA non-specific endonuclease family. In terms of assembly, homodimer. Mg(2+) is required as a cofactor.

It localises to the secreted. The catalysed reaction is Endonucleolytic cleavage to 5'-phosphomononucleotide and 5'-phosphooligonucleotide end-products.. Its function is as follows. Catalyzes the hydrolysis of both DNA and RNA, double- or single-stranded, at the 3'position of the phosphodiester bond to produce 5'-phosphorylated mono-, di-, tri- and tetranucleotides. DNA is a slightly better substrate than RNA. The sequence is that of Nuclease (nucA) from Serratia marcescens.